The sequence spans 241 residues: Ribosomal RNA small subunit methyltransferase J (241 aa).

Residues 94–95 (RD) and aspartate 163 each bind S-adenosyl-L-methionine.

This sequence belongs to the methyltransferase superfamily. RsmJ family.

It is found in the cytoplasm. It catalyses the reaction guanosine(1516) in 16S rRNA + S-adenosyl-L-methionine = N(2)-methylguanosine(1516) in 16S rRNA + S-adenosyl-L-homocysteine + H(+). In terms of biological role, specifically methylates the guanosine in position 1516 of 16S rRNA. The protein is Ribosomal RNA small subunit methyltransferase J of Francisella tularensis subsp. novicida (strain U112).